Consider the following 425-residue polypeptide: Putative chloroquine resistance transporter (425 aa).

At 1 to 56 the chain is on the cytoplasmic side; it reads MTGIKKGKNKKKNMKNDDRYKELDSLITNGSEIGNNSGRSCVKRFFKIIGNEMKNN. The helical transmembrane segment at 57 to 77 threads the bilayer; sequence VYVYLLSILYLCVCVMNKVFA. Residues 78–88 are Vacuolar-facing; that stretch reads KRTLNKMGNYS. The N-linked (GlcNAc...) asparagine glycan is linked to Asn-86. The chain crosses the membrane as a helical span at residues 89 to 109; the sequence is FVTSETHNIICIIVFQLLYFI. The Cytoplasmic portion of the chain corresponds to 110–126; the sequence is YRKTSSSSVYKNESQKN. A helical transmembrane segment spans residues 127–147; it reads FGWQFFLISLLDASTVIISMI. The Vacuolar portion of the chain corresponds to 148–157; sequence GLTRTTGNIQ. The helical transmembrane segment at 158-178 threads the bilayer; it reads SFIMQLIIPVNMYFWFMFLGY. Over 179-181 the chain is Cytoplasmic; sequence RYH. A helical membrane pass occupies residues 182–202; the sequence is LFNYLGAFIILITIAVVETFL. Topologically, residues 203–210 are vacuolar; sequence SFETQGEN. A helical transmembrane segment spans residues 211–231; it reads SIIFNLIMISAFNTLSFSNMT. At 232–249 the chain is on the cytoplasmic side; the sequence is REVVFKKHKINILRLNAM. A helical transmembrane segment spans residues 250-270; it reads VVLFQFFTSLLVLPVYNIPFL. Topologically, residues 271–318 are vacuolar; the sequence is KEIYMPFSEMSTNINNGLRCLFYGENTIVENCGVGMVKMCDNCEGAWK. 2 cysteine pairs are disulfide-bonded: Cys-290–Cys-313 and Cys-302–Cys-310. A helical transmembrane segment spans residues 319 to 339; the sequence is TFITFSFFNICDNLLACYIID. Residues 340–347 lie on the Cytoplasmic side of the membrane; it reads KFSTMTYT. The chain crosses the membrane as a helical span at residues 348 to 368; the sequence is IVSCIQGPAITIAYYFKFLAG. Over 369-378 the chain is Vacuolar; sequence DAVRKPRILD. Residues 379–399 traverse the membrane as a helical segment; sequence FLTLFGYLFGTIIYRIGNIIL. The Cytoplasmic portion of the chain corresponds to 400–425; the sequence is EKKQVIKSQNSNDSEAELTSIETSRA.

This sequence belongs to the CRT-like transporter family.

Its subcellular location is the vacuole membrane. Functionally, nutrient transporter. Involved in maintaining the osmotic homeostasis of the digestive vacuole. This chain is Putative chloroquine resistance transporter, found in Plasmodium berghei.